Here is an 860-residue protein sequence, read N- to C-terminus: MAPAGCCCCCCFWGGAVAAAGAARRVLLLLLLGVLSAGLRPGALATEHYSPLSLLKQELQHRQQQEAPAGGGGCSPQSGDWGDQYSAECGESSFLNFHDSDCEPKGSSPCDSLLSLNTEKILSQAKSIAEQKRFPFATDNDSTNEELAIAYVLIGSGLYDEAIRHFSTMLQEEPDLVSAIYGRGIAYGKKGLHDIKNAELALFELSRVITLEPDRPEVFEQRAEILSPLGRINEAVNDLTKAIQLQPSARLYRHRGTLYFISEDYATAHEDFQQSLELNKNQPIAMLYKGLTFFHRGLLKEAIESFKEALKQKVDFIDAYKSLGQAYRELGNFEAATESFQKALLLNQNHVQTLQLRGMMLYHHGSLQEALKNFKRCLQLEPYNEVCQYMKGLSHVAMGQFYEGIKAQTKVMLNDPLPGQKASPEYLKVKYLREYSRYLHAHLDTPLTEYNIDVDLPGSFKDHWAKNLPFLIEDYEEQPGLQPHIKDVLHQNFESYKPEVQELICVADRLGSLMQYETPGFLPNKRIHRAMGLAALEVMQAVQRTWTNSKVRMNGKTRLMQWRDMFDIAVKWRRIADPDQPVLWLDQMPARSLSRGFNNHINLIRGQVINMRYLEYFEKILHFIKDRILVYHGANNPKGLLEVREALEKVHKVEDLLPIMKQFNTKTKDGFTVNTKVPSLKDQGKEYDGFTITITGDKVGNILFSVETQTTEERTQLYHAEIDALYKDLTAKGKVLILSSEFGEADAVCNLILSLVYYFYNLMPLSRGSSVIAYSVIVGALMASGKEVAGKIPKGKLVDFEAMTAPGSEAFSKVAKSWMNLKSISPSYKTLPSVSETFPTLRSMIEVLNTDSSPRCLKKL.

TPR repeat units lie at residues 143 to 176 (TNEELAIAYVLIGSGLYDEAIRHFSTMLQEEPDL), 216 to 248 (PEVFEQRAEILSPLGRINEAVNDLTKAIQLQPS), 249 to 282 (ARLYRHRGTLYFISEDYATAHEDFQQSLELNKNQ), 284 to 316 (IAMLYKGLTFFHRGLLKEAIESFKEALKQKVDF), 317 to 350 (IDAYKSLGQAYRELGNFEAATESFQKALLLNQNH), 352 to 384 (QTLQLRGMMLYHHGSLQEALKNFKRCLQLEPYN), and 386 to 418 (VCQYMKGLSHVAMGQFYEGIKAQTKVMLNDPLP).

This Homo sapiens (Human) protein is Tetratricopeptide repeat protein 13 (TTC13).